The following is a 222-amino-acid chain: MSSSESIRMVLIGPPGAGKGTQAPNLQERFHAAHLATGDMLRSQIAKGTQLGLEAKKIMDQGGLVSDDIMVNMIKDELTNNPACKNGFILDGFPRTIPQAEKLDQMLKEQGTPLEKAIELKVDDELLVARITGRLIHPASGRSYHKIFNPPKEDMKDDVTGEALVQRSDDNADALKKRLAAYHAQTEPIVDFYKKTGIWAGVDASQPPATVWADILNKLGKD.

Ser-2 is a propeptide (removed in mature form). N-acetylserine occurs at positions 2 and 3. Position 16-21 (Gly-16–Thr-21) interacts with ATP. The NMP stretch occupies residues Ala-36 to Val-65. AMP-binding positions include Thr-37, Arg-42, Gly-63–Val-65, Gly-92–Arg-95, and Gln-99. The interval Gly-133–Asp-170 is LID. Residues Arg-134 and Ser-143 to Tyr-144 contribute to the ATP site. 2 residues coordinate AMP: Arg-167 and Arg-178. Gln-206 provides a ligand contact to ATP.

It belongs to the adenylate kinase family. AK2 subfamily. Monomer.

Its subcellular location is the cytoplasm. It localises to the cytosol. The protein resides in the mitochondrion intermembrane space. It catalyses the reaction AMP + ATP = 2 ADP. Functionally, catalyzes the reversible transfer of the terminal phosphate group between ATP and AMP. Plays an important role in cellular energy homeostasis and in adenine nucleotide metabolism. Adenylate kinase activity is critical for regulation of the phosphate utilization and the AMP de novo biosynthesis pathways. This Saccharomyces cerevisiae (strain RM11-1a) (Baker's yeast) protein is Adenylate kinase.